The chain runs to 377 residues: Peptidyl-prolyl cis-trans isomerase D (377 aa).

In terms of domain architecture, PPIase cyclophilin-type spans 11-178; it reads YFDIQIGSQK…TDVTIVDCGE (168 aa). TPR repeat units lie at residues 220–253, 273–306, and 314–347; these read ASELKNFGNTAFKSGDVALGLDKYQKGLRYLNEF, FTLHSNSSLLANKLGQYKNAQNWATYALEVADAA, and AKAYYRRAVAYSGQKEEDEALKDLQEALKLAPGD.

This sequence belongs to the cyclophilin-type PPIase family. PPIase D subfamily.

Its subcellular location is the cytoplasm. It catalyses the reaction [protein]-peptidylproline (omega=180) = [protein]-peptidylproline (omega=0). Functionally, PPIases accelerate the folding of proteins. It catalyzes the cis-trans isomerization of proline imidic peptide bonds in oligopeptides. The sequence is that of Peptidyl-prolyl cis-trans isomerase D (cpr6) from Aspergillus fumigatus (strain ATCC MYA-4609 / CBS 101355 / FGSC A1100 / Af293) (Neosartorya fumigata).